The following is a 507-amino-acid chain: ATP synthase subunit alpha (507 aa).

Position 168–175 (168–175 (GDRQTGKT)) interacts with ATP.

This sequence belongs to the ATPase alpha/beta chains family. F-type ATPases have 2 components, CF(1) - the catalytic core - and CF(0) - the membrane proton channel. CF(1) has five subunits: alpha(3), beta(3), gamma(1), delta(1), epsilon(1). CF(0) has three main subunits: a(1), b(2) and c(9-12). The alpha and beta chains form an alternating ring which encloses part of the gamma chain. CF(1) is attached to CF(0) by a central stalk formed by the gamma and epsilon chains, while a peripheral stalk is formed by the delta and b chains.

It localises to the cell membrane. The enzyme catalyses ATP + H2O + 4 H(+)(in) = ADP + phosphate + 5 H(+)(out). In terms of biological role, produces ATP from ADP in the presence of a proton gradient across the membrane. The alpha chain is a regulatory subunit. This Mesomycoplasma hyopneumoniae (strain J / ATCC 25934 / NCTC 10110) (Mycoplasma hyopneumoniae) protein is ATP synthase subunit alpha.